The primary structure comprises 235 residues: Large ribosomal subunit protein uL1 (235 aa).

This sequence belongs to the universal ribosomal protein uL1 family. Part of the 50S ribosomal subunit.

Its function is as follows. Binds directly to 23S rRNA. The L1 stalk is quite mobile in the ribosome, and is involved in E site tRNA release. Protein L1 is also a translational repressor protein, it controls the translation of the L11 operon by binding to its mRNA. The polypeptide is Large ribosomal subunit protein uL1 (Prochlorococcus marinus (strain MIT 9312)).